The primary structure comprises 429 residues: Probable alcohol acetyltransferase orf1 (429 aa).

Belongs to the alcohol acetyltransferase FCK4 family.

It functions in the pathway secondary metabolite biosynthesis. Functionally, probable alcohol acetyltransferase; part of the gene cluster that mediates the biosynthesis of the glycolipid biosurfactant ustilagic acid (UA). UA is a secreted cellobiose glycolipid that is toxic for many microorganisms and confers biocontrol activity to U.maydis. UA consists of 15,16-dihydroxypalmitic or 2,15,16-trihydroxypalmitic acid, which is O-glycosidically linked to cellobiose at its terminal hydroxyl group. In addition, the cellobiose moiety is acetylated and acylated with a short-chain hydroxy fatty acid. UA biosynthesis starts with omega-hydroxylation of palmitic acid catalyzed by the cytochrome P450 monooxygenase cyp1. Terminal hydroxylation of palmitic acid precedes subterminal hydroxylation catalyzed by the cytochrome P450 monooxygenase cyp2. Sequential glucosylation of the hydroxy fatty acid is probably catalyzed by the glycosyltransferase ugt1. The cellobiose lipid is further decorated by acetylation of the proximal glucose residue and by acylation with a short-chain beta-hydroxy fatty acid at the distal glucose residue. The acyltransferase uat1 may be a good candidate for catalyzing either acetylation or acylation of the cellobiose lipid. The fatty acid synthase fas2 may be involved in synthesis of the carbon backbone of the short-chain beta-hydroxy fatty acid esterified to the cellobiose disaccharide. The secreted UA consists of a mixture of both alpha-hydroxylated and non-hydroxylated glycolipids; therefore, alpha-hydroxylation of the long-chain fatty, catalyzed by the fatty acid hydroxylase ahd1, occurs late in UA biosynthesis and may be the last step before secretion. This is Probable alcohol acetyltransferase orf1 from Mycosarcoma maydis (Corn smut fungus).